A 359-amino-acid polypeptide reads, in one-letter code: Aflatoxin B1 aldehyde reductase member 2 (359 aa).

A mitochondrion-targeting transit peptide spans 1 to 38; that stretch reads MLSAASRVVSRAAVHCALRSPPPEARALAMSRPPPPRV. Phosphoserine is present on serine 40. Aspartate 72 contacts NADP(+). Tyrosine 77 serves as the catalytic Proton donor. At lysine 128 the chain carries N6-acetyllysine. Histidine 141 is a substrate binding site. Residues 171-172, glutamine 197, 226-236, and arginine 250 each bind NADP(+); these read SN and NPLAGGLLTGK. Lysine 236 is subject to N6-succinyllysine. Serine 255 is subject to Phosphoserine. Substrate contacts are provided by tyrosine 260 and arginine 263. Residue 318–326 coordinates NADP(+); it reads SSLEQLEQN. Residue arginine 359 participates in substrate binding.

It belongs to the aldo/keto reductase family. Aldo/keto reductase 2 subfamily. Homodimer. Detected in brain, liver, small intestine and testis, and at lower levels in heart, prostate, skeletal muscle and spleen. Detected in kidney proximal and distal tubules, endothelial cells lining the Bowman's capsules and some cysts. Detected at low levels in lung and pancreas (at protein level). Widely expressed.

The protein resides in the mitochondrion. Its subcellular location is the golgi apparatus. The protein localises to the cytoplasm. The enzyme catalyses 4-hydroxybutanoate + NADP(+) = succinate semialdehyde + NADPH + H(+). In terms of biological role, catalyzes the NADPH-dependent reduction of succinic semialdehyde to gamma-hydroxybutyrate. May have an important role in producing the neuromodulator gamma-hydroxybutyrate (GHB). Has broad substrate specificity. Has NADPH-dependent aldehyde reductase activity towards 2-carboxybenzaldehyde, 2-nitrobenzaldehyde and pyridine-2-aldehyde (in vitro). Can reduce 1,2-naphthoquinone and 9,10-phenanthrenequinone (in vitro). Can reduce the dialdehyde protein-binding form of aflatoxin B1 (AFB1) to the non-binding AFB1 dialcohol. May be involved in protection of liver against the toxic and carcinogenic effects of AFB1, a potent hepatocarcinogen. The polypeptide is Aflatoxin B1 aldehyde reductase member 2 (AKR7A2) (Homo sapiens (Human)).